Consider the following 205-residue polypeptide: Large ribosomal subunit protein uL4 (205 aa).

Residues 43–97 (GKRQGTSKVKNRSAVRGGGKKPWRQKGTGRARQGSIRAPQWRGGGTVFGPTPRSY) form a disordered region. Over residues 51–71 (VKNRSAVRGGGKKPWRQKGTG) the composition is skewed to basic residues.

Belongs to the universal ribosomal protein uL4 family. As to quaternary structure, part of the 50S ribosomal subunit.

Its function is as follows. One of the primary rRNA binding proteins, this protein initially binds near the 5'-end of the 23S rRNA. It is important during the early stages of 50S assembly. It makes multiple contacts with different domains of the 23S rRNA in the assembled 50S subunit and ribosome. Functionally, forms part of the polypeptide exit tunnel. This chain is Large ribosomal subunit protein uL4, found in Lactobacillus acidophilus (strain ATCC 700396 / NCK56 / N2 / NCFM).